We begin with the raw amino-acid sequence, 442 residues long: SPRY domain-containing protein 3 (442 aa).

The 188-residue stretch at 17-204 folds into the B30.2/SPRY domain; that stretch reads DLNLHYRFLN…VRLHLNAELG (188 aa). Residues 371–394 are disordered; the sequence is EGEEEEEEEEEEEDGEEIEPEHEG. A compositionally biased stretch (acidic residues) spans 372–390; it reads GEEEEEEEEEEEDGEEIEP.

This is SPRY domain-containing protein 3 (SPRYD3) from Homo sapiens (Human).